Reading from the N-terminus, the 122-residue chain is Large ribosomal subunit protein uL14 (122 aa).

This sequence belongs to the universal ribosomal protein uL14 family. In terms of assembly, part of the 50S ribosomal subunit. Forms a cluster with proteins L3 and L19. In the 70S ribosome, L14 and L19 interact and together make contacts with the 16S rRNA in bridges B5 and B8.

Its function is as follows. Binds to 23S rRNA. Forms part of two intersubunit bridges in the 70S ribosome. In Nitratidesulfovibrio vulgaris (strain ATCC 29579 / DSM 644 / CCUG 34227 / NCIMB 8303 / VKM B-1760 / Hildenborough) (Desulfovibrio vulgaris), this protein is Large ribosomal subunit protein uL14.